Consider the following 1356-residue polypeptide: Vegetative incompatibility protein HET-E-1 (1356 aa).

The region spanning 294–629 is the NACHT domain; that stretch reads RLLWINGDPG…DFLLGTASDK (336 aa). Residue 300–307 coordinates GTP; sequence GDPGKGKT. WD repeat units follow at residues 839–869, 881–911, 923–953, 965–995, 1007–1037, 1049–1079, 1091–1121, 1133–1163, 1175–1205, and 1217–1247; these read GHGS…KIWD, GHGG…KIWD, and GHGD…KIWD.

Responsible for vegetative incompatibility through specific interactions with different alleles of the unlinked gene, het-c. In Podospora anserina (Pleurage anserina), this protein is Vegetative incompatibility protein HET-E-1 (HET-E1).